Reading from the N-terminus, the 269-residue chain is Tryptophan synthase alpha chain (269 aa).

Catalysis depends on proton acceptor residues E41 and D52.

Belongs to the TrpA family. Tetramer of two alpha and two beta chains.

The catalysed reaction is (1S,2R)-1-C-(indol-3-yl)glycerol 3-phosphate + L-serine = D-glyceraldehyde 3-phosphate + L-tryptophan + H2O. It participates in amino-acid biosynthesis; L-tryptophan biosynthesis; L-tryptophan from chorismate: step 5/5. The alpha subunit is responsible for the aldol cleavage of indoleglycerol phosphate to indole and glyceraldehyde 3-phosphate. The sequence is that of Tryptophan synthase alpha chain from Geobacillus stearothermophilus (Bacillus stearothermophilus).